The primary structure comprises 626 residues: Glucoamylase (626 aa).

The first 19 residues, 1 to 19, serve as a signal peptide directing secretion; sequence MHLVSSLLVVGAAFQAVLG. Residues 20-35 constitute a propeptide that is removed on maturation; the sequence is LPDPLHEKRHSDIIKR. N-linked (GlcNAc...) asparagine glycosylation occurs at Asn106. Trp155 lines the substrate pocket. The N-linked (GlcNAc...) asparagine glycan is linked to Asn206. Catalysis depends on Asp211, which acts as the Proton acceptor. The Proton donor role is filled by Glu214. N-linked (GlcNAc...) asparagine glycosylation occurs at Asn217. The CBM20 domain occupies 520–626; it reads CAADHEVLVT…STATLDDTWR (107 aa).

It belongs to the glycosyl hydrolase 15 family.

It carries out the reaction Hydrolysis of terminal (1-&gt;4)-linked alpha-D-glucose residues successively from non-reducing ends of the chains with release of beta-D-glucose.. The sequence is that of Glucoamylase (gla-1) from Neurospora crassa (strain ATCC 24698 / 74-OR23-1A / CBS 708.71 / DSM 1257 / FGSC 987).